The sequence spans 1161 residues: Lysine-specific demethylase 2A (1161 aa).

Phosphoserine is present on serine 28. The JmjC domain occupies 148–316; sequence FSHTRLENMV…MQLKIYSIED (169 aa). Residue threonine 209 participates in substrate binding. Fe cation contacts are provided by histidine 212 and aspartate 214. Substrate is bound at residue lysine 229. Histidine 284 serves as a coordination point for Fe cation. Serine 390 and serine 394 each carry phosphoserine. The segment covering 419–433 has biased composition (low complexity); the sequence is KTLSGDSSSDSTRGS. Residues 419–445 are disordered; the sequence is KTLSGDSSSDSTRGSHNGQVWDPQCSP. At serine 444 the chain carries Phosphoserine. Residue lysine 505 forms a Glycyl lysine isopeptide (Lys-Gly) (interchain with G-Cter in SUMO2) linkage. Residues 532 to 557 are disordered; the sequence is VPTIPITKPHTMKPAPRLTPVRPAAA. The residue at position 550 (threonine 550) is a Phosphothreonine. Residue serine 558 is modified to Phosphoserine. The segment at 564-610 adopts a CXXC-type zinc-finger fold; it reads ARRRRVRCRKCKACVQGECGVCHYCRDMKKFGGPGRMKQSCVLRQCL. Positions 571, 574, 577, 582, 585, 588, 604, 609, 620, and 623 each coordinate Zn(2+). The PHD-type zinc finger occupies 617-678; it reads SVTCSLCGEV…CWECPKCYQE (62 aa). Threonine 632 is subject to Phosphothreonine. Positions 642, 645, 650, 653, 672, and 675 each coordinate Zn(2+). Serine 692 is modified (phosphoserine). Residues 705-789 are disordered; sequence LRSCEEPLTP…PSGKKELSEV (85 aa). Threonine 713 is subject to Phosphothreonine. Phosphoserine is present on residues serine 718 and serine 731. 2 stretches are compositionally biased toward basic and acidic residues: residues 746-757 and 771-789; these read SDHHSASRDERF and TMVREKENNPSGKKELSEV. A phosphoserine mark is found at serine 825, serine 868, and serine 882. The tract at residues 840–886 is disordered; sequence CPARNPQHGDEEGLGGEEEEEEEEEEDDSAEEGGAARLNGRGSWAQD. Over residues 851–870 the composition is skewed to acidic residues; the sequence is EGLGGEEEEEEEEEEDDSAE. The F-box domain maps to 888-935; sequence DESWMQREVWMSVFRYLSRKELCECMRVCKTWYKWCCDKRLWTKIDLS. LRR repeat units follow at residues 960-981 and 983-1009; these read WTNISKKQLTWLVNRLPGLKDL and LAGCSWSAVSALSTSSCPLLRTLDLRW. Arginine 1019 is modified (ADP-ribosylarginine). LRR repeat units follow at residues 1047-1072, 1073-1102, 1103-1127, and 1128-1155; these read GLDITDATLRLIIRHMPLLSRLDLSH, CSHLTDQSSNLLTAVGSSTRYSLTELNMAG, CNKLTDQTLFFLRRIANVTLIDLRG, and CKQITRKACEHFISDLSINSLYCLSDEK.

The protein belongs to the JHDM1 histone demethylase family. Part of a SCF (SKP1-cullin-F-box) protein ligase complex. Interacts with CBX5/HP1A; the interaction promotes CBX5 localization to chromatin. The SKP1-KDM2A complex interacts with UBB. The cofactor is Fe(2+). In terms of processing, mono-ADP-ribosylated at Arg-1019 in response to DNA damage, leading to displacement from chromatin, resulting in increased dimethylation of histone H3 at 'Lys-36'.

The protein localises to the nucleus. The protein resides in the nucleoplasm. It is found in the chromosome. The catalysed reaction is N(6),N(6)-dimethyl-L-lysyl(36)-[histone H3] + 2 2-oxoglutarate + 2 O2 = L-lysyl(36)-[histone H3] + 2 formaldehyde + 2 succinate + 2 CO2. Its function is as follows. Histone demethylase that specifically demethylates 'Lys-36' of histone H3, thereby playing a central role in histone code. Preferentially demethylates dimethylated H3 'Lys-36' residue while it has weak or no activity for mono- and tri-methylated H3 'Lys-36'. May also recognize and bind to some phosphorylated proteins and promote their ubiquitination and degradation. Required to maintain the heterochromatic state. Associates with centromeres and represses transcription of small non-coding RNAs that are encoded by the clusters of satellite repeats at the centromere. Required to sustain centromeric integrity and genomic stability, particularly during mitosis. Regulates circadian gene expression by repressing the transcriptional activator activity of CLOCK-BMAL1 heterodimer and RORA in a catalytically-independent manner. The chain is Lysine-specific demethylase 2A (Kdm2a) from Mus musculus (Mouse).